The chain runs to 248 residues: MYSAQSSISKLTNLCEISSVEVGQHFYWQIGGFQVHAQVLITSWIVIAILLGLAILATQNLQTIPTSGQNFVEYILEFIRDLTRTQIGEEEYRPWVPFIGTMFLFIFVSNWSGALLPWRIFELPHGELAAPTNDINTTVALALPTSVAYFYAGLRKKGLSYSGKYIQPTPILLPINILEDFTKPLPLSFRLFGNILADELVVAVPISLVPLVVPIPMMFLGLFTSAIQALIFATLAAAYIGESMEGHH.

Helical transmembrane passes span 37–57 (AQVL…AILA), 96–116 (VPFI…GALL), 134–154 (DINT…YAGL), 200–220 (LVVA…MMFL), and 221–241 (GLFT…AYIG).

Belongs to the ATPase A chain family. F-type ATPases have 2 components, CF(1) - the catalytic core - and CF(0) - the membrane proton channel. CF(1) has five subunits: alpha(3), beta(3), gamma(1), delta(1), epsilon(1). CF(0) has four main subunits: a, b, b' and c.

The protein resides in the plastid. Its subcellular location is the chloroplast thylakoid membrane. Functionally, key component of the proton channel; it plays a direct role in the translocation of protons across the membrane. The polypeptide is ATP synthase subunit a, chloroplastic (Anthoceros angustus (Hornwort)).